Here is a 507-residue protein sequence, read N- to C-terminus: ATP synthase subunit alpha, chloroplastic (507 aa).

Residue 170–177 participates in ATP binding; it reads GDRQTGKT.

It belongs to the ATPase alpha/beta chains family. In terms of assembly, F-type ATPases have 2 components, CF(1) - the catalytic core - and CF(0) - the membrane proton channel. CF(1) has five subunits: alpha(3), beta(3), gamma(1), delta(1), epsilon(1). CF(0) has four main subunits: a, b, b' and c.

Its subcellular location is the plastid. The protein localises to the chloroplast thylakoid membrane. The catalysed reaction is ATP + H2O + 4 H(+)(in) = ADP + phosphate + 5 H(+)(out). Its function is as follows. Produces ATP from ADP in the presence of a proton gradient across the membrane. The alpha chain is a regulatory subunit. The polypeptide is ATP synthase subunit alpha, chloroplastic (Physcomitrium patens (Spreading-leaved earth moss)).